The primary structure comprises 321 residues: PI-PLC X domain-containing protein 3 (321 aa).

The region spanning 22 to 197 (SIHSIPLTNL…DYQVLVFYHS (176 aa)) is the PI-PLC X-box domain. Catalysis depends on residues histidine 37 and histidine 114.

This Bos taurus (Bovine) protein is PI-PLC X domain-containing protein 3 (PLCXD3).